Here is a 146-residue protein sequence, read N- to C-terminus: Neutral phospholipase A2 B (146 aa).

The N-terminal stretch at 1–21 is a signal peptide; sequence MNPAHLLILAAVCVSPLGASS. Residues 22–27 constitute a propeptide that is removed on maturation; sequence NRPMPL. 7 disulfide bridges follow: Cys38/Cys98, Cys53/Cys145, Cys55/Cys71, Cys70/Cys126, Cys77/Cys119, Cys87/Cys112, and Cys105/Cys117. Residues Tyr54, Gly56, and Gly58 each contribute to the Ca(2+) site. His74 is a catalytic residue. Residue Asp75 coordinates Ca(2+). Asp120 is an active-site residue.

It belongs to the phospholipase A2 family. Group I subfamily. D49 sub-subfamily. Requires Ca(2+) as cofactor. As to expression, expressed by the venom gland.

It localises to the secreted. The enzyme catalyses a 1,2-diacyl-sn-glycero-3-phosphocholine + H2O = a 1-acyl-sn-glycero-3-phosphocholine + a fatty acid + H(+). In terms of biological role, PLA2 catalyzes the calcium-dependent hydrolysis of the 2-acyl groups in 3-sn-phosphoglycerides. The polypeptide is Neutral phospholipase A2 B (Naja sputatrix (Malayan spitting cobra)).